The primary structure comprises 203 residues: Leucyl/phenylalanyl-tRNA--protein transferase (203 aa).

Belongs to the L/F-transferase family.

It is found in the cytoplasm. The catalysed reaction is N-terminal L-lysyl-[protein] + L-leucyl-tRNA(Leu) = N-terminal L-leucyl-L-lysyl-[protein] + tRNA(Leu) + H(+). It catalyses the reaction N-terminal L-arginyl-[protein] + L-leucyl-tRNA(Leu) = N-terminal L-leucyl-L-arginyl-[protein] + tRNA(Leu) + H(+). It carries out the reaction L-phenylalanyl-tRNA(Phe) + an N-terminal L-alpha-aminoacyl-[protein] = an N-terminal L-phenylalanyl-L-alpha-aminoacyl-[protein] + tRNA(Phe). Its function is as follows. Functions in the N-end rule pathway of protein degradation where it conjugates Leu, Phe and, less efficiently, Met from aminoacyl-tRNAs to the N-termini of proteins containing an N-terminal arginine or lysine. The protein is Leucyl/phenylalanyl-tRNA--protein transferase of Chelativorans sp. (strain BNC1).